Consider the following 390-residue polypeptide: E3 ubiquitin-protein ligase At4g11680 (390 aa).

Low complexity predominate over residues 1 to 19; it reads MSSSSSTTTNTTTESDSSS. The tract at residues 1 to 39 is disordered; sequence MSSSSSTTTNTTTESDSSSLPTHIGRSNSDGIIDTTPFL. Transmembrane regions (helical) follow at residues 109–129, 142–162, 212–232, 244–264, and 265–285; these read VVFL…AVLI, VWVV…CVEY, MFSF…GQTL, IIFL…ACVI, and GLAV…VADQ. Residues 338 to 379 form an RING-type; atypical zinc finger; sequence CCICLCEYEDGVELRELPCNHHFHCTCIDKWLHINSRCPLCK.

The protein localises to the membrane. The catalysed reaction is S-ubiquitinyl-[E2 ubiquitin-conjugating enzyme]-L-cysteine + [acceptor protein]-L-lysine = [E2 ubiquitin-conjugating enzyme]-L-cysteine + N(6)-ubiquitinyl-[acceptor protein]-L-lysine.. It functions in the pathway protein modification; protein ubiquitination. Functionally, mediates E2-dependent protein ubiquitination in vitro. This is E3 ubiquitin-protein ligase At4g11680 from Arabidopsis thaliana (Mouse-ear cress).